Reading from the N-terminus, the 632-residue chain is Polyadenylate-binding protein, cytoplasmic and nuclear (632 aa).

Positions 1–11 (MSAADANQLQE) are enriched in polar residues. The tract at residues 1–43 (MSAADANQLQESLEKLNLDSAPAAAEEEAVAAESAPAGEEGAD) is disordered. A compositionally biased stretch (low complexity) spans 31–43 (AAESAPAGEEGAD). 4 RRM domains span residues 52–130 (ASLY…WSQR), 140–217 (GNIF…KHIS), 233–310 (TNIY…RAQK), and 336–413 (VNLF…LAQR). A PABC domain is found at 534–615 (QQRDLAAIIA…ALTAFEEYKN (82 aa)).

It belongs to the polyadenylate-binding protein type-1 family.

The protein resides in the cytoplasm. It is found in the nucleus. Its function is as follows. Binds the poly(A) tail of mRNA. Appears to be an important mediator of the multiple roles of the poly(A) tail in mRNA biogenesis, stability and translation. In the nucleus, involved in both mRNA cleavage and polyadenylation. Is also required for efficient mRNA export to the cytoplasm. Acts in concert with a poly(A)-specific nuclease (PAN) to affect poly(A) tail shortening, which may occur concomitantly with either nucleocytoplasmic mRNA transport or translational initiation. In the cytoplasm, stimulates translation initiation and regulates mRNA decay through translation termination-coupled poly(A) shortening, probably mediated by PAN. This chain is Polyadenylate-binding protein, cytoplasmic and nuclear (PAB1), found in Scheffersomyces stipitis (strain ATCC 58785 / CBS 6054 / NBRC 10063 / NRRL Y-11545) (Yeast).